Consider the following 664-residue polypeptide: UvrABC system protein B (664 aa).

A Helicase ATP-binding domain is found at 23–180 (EGLNRGMRFQ…ERLARIGYQR (158 aa)). 36–43 (GVTGSGKT) is an ATP binding site. Positions 89 to 112 (YYDYYQPEAYIPTKDLYIEKNADI) match the Beta-hairpin motif. Positions 429 to 588 (DLVNEIVKVK…ITPRSVIKPL (160 aa)) constitute a Helicase C-terminal domain. In terms of domain architecture, UVR spans 622 to 657 (EEYMAVLEEEMYRAASELRYEDAAALRDELFRIREE).

Belongs to the UvrB family. Forms a heterotetramer with UvrA during the search for lesions. Interacts with UvrC in an incision complex.

Its subcellular location is the cytoplasm. In terms of biological role, the UvrABC repair system catalyzes the recognition and processing of DNA lesions. A damage recognition complex composed of 2 UvrA and 2 UvrB subunits scans DNA for abnormalities. Upon binding of the UvrA(2)B(2) complex to a putative damaged site, the DNA wraps around one UvrB monomer. DNA wrap is dependent on ATP binding by UvrB and probably causes local melting of the DNA helix, facilitating insertion of UvrB beta-hairpin between the DNA strands. Then UvrB probes one DNA strand for the presence of a lesion. If a lesion is found the UvrA subunits dissociate and the UvrB-DNA preincision complex is formed. This complex is subsequently bound by UvrC and the second UvrB is released. If no lesion is found, the DNA wraps around the other UvrB subunit that will check the other stand for damage. This chain is UvrABC system protein B, found in Thermotoga petrophila (strain ATCC BAA-488 / DSM 13995 / JCM 10881 / RKU-1).